The primary structure comprises 291 residues: ATP synthase gamma chain (291 aa).

This sequence belongs to the ATPase gamma chain family. In terms of assembly, F-type ATPases have 2 components, CF(1) - the catalytic core - and CF(0) - the membrane proton channel. CF(1) has five subunits: alpha(3), beta(3), gamma(1), delta(1), epsilon(1). CF(0) has three main subunits: a, b and c.

It is found in the cell membrane. Functionally, produces ATP from ADP in the presence of a proton gradient across the membrane. The gamma chain is believed to be important in regulating ATPase activity and the flow of protons through the CF(0) complex. The chain is ATP synthase gamma chain from Streptococcus pyogenes serotype M49 (strain NZ131).